The chain runs to 339 residues: MPNTKPRIVITMGDPTGVGPEIIAATLAEPEVRQCCRFLVVGDSAAMARGITVAGAALRVERTDTLNWEESKEGVLPLWEISSLTEADMQYGCPTVASGDAMYRAICEAARLCLEGNADAMATAPISKEALNRAGHRYPGHTELLAELAGAERVVMMLAGFRLRVTLVTIHEALADVPRLVTFERVLETIRITHRDLHRYFRRNPRIAVLALNPHCGEGGMFGDEEARIIAPAVAAARQEGIDAIGPLSADTLFHFAVQGAYDAVVCMYHDQGLIPLKLLHFDDGVNVTLGLPIIRTSVDHGTAYDLAGTGRASAESMKAAILMAAEMARVKGSGGGTP.

Positions 141 and 142 each coordinate substrate. H171, H215, and H270 together coordinate a divalent metal cation. Substrate contacts are provided by K278, N287, and R296.

This sequence belongs to the PdxA family. In terms of assembly, homodimer. Requires Zn(2+) as cofactor. The cofactor is Mg(2+). It depends on Co(2+) as a cofactor.

It is found in the cytoplasm. The catalysed reaction is 4-(phosphooxy)-L-threonine + NAD(+) = 3-amino-2-oxopropyl phosphate + CO2 + NADH. It participates in cofactor biosynthesis; pyridoxine 5'-phosphate biosynthesis; pyridoxine 5'-phosphate from D-erythrose 4-phosphate: step 4/5. Catalyzes the NAD(P)-dependent oxidation of 4-(phosphooxy)-L-threonine (HTP) into 2-amino-3-oxo-4-(phosphooxy)butyric acid which spontaneously decarboxylates to form 3-amino-2-oxopropyl phosphate (AHAP). This is 4-hydroxythreonine-4-phosphate dehydrogenase from Geobacter metallireducens (strain ATCC 53774 / DSM 7210 / GS-15).